A 404-amino-acid polypeptide reads, in one-letter code: Ammonium transporter (404 aa).

A run of 9 helical transmembrane segments spans residues Val7–Tyr27, Phe44–Ala64, Leu96–Phe116, Phe125–Trp145, Phe158–Val178, Ile227–Ile247, Leu254–Val274, Phe277–Leu297, and Ile352–Ile372.

Belongs to the ammonia transporter channel (TC 1.A.11.2) family. In terms of assembly, interacts with NrgB for a correct localization of the latter. GlnK-AmtB complex interacts with TnrA.

It localises to the cell membrane. In terms of biological role, functions as an ammonium and methylammonium transporter in the absence of glutamine. Required for ammonium utilization at low concentrations or at low pH values, when ammonium is the single nitrogen source. Required for binding of NrgB to the membrane. Interaction between GlnK-AmtB complex and TnrA protects TnrA from proteolytic degradation. This chain is Ammonium transporter, found in Bacillus subtilis (strain 168).